The primary structure comprises 199 residues: Phosphatidylethanolamine N-methyltransferase (199 aa).

Residues 2-12 (SWLLGYVDPTE) are Lumenal-facing. An intramembrane region (helical) is located at residues 13–33 (PSFVAAVLTIVFNPLFWNVVA). Residues 34 to 45 (RWEQRTRKLSRA) are Lumenal-facing. Residues 46–66 (FGSPYLACYSLGSIILLLNIL) traverse the membrane as a helical segment. The Cytoplasmic segment spans residues 67 to 93 (RSHCFTQAMMSQPKMEGLDSHTIYFLG). Residues 94–114 (LALLGWGLVFVLSSFYALGFT) form a helical membrane-spanning segment. 98–100 (GWG) contributes to the S-adenosyl-L-methionine binding site. The Lumenal segment spans residues 115–157 (GTFLGDYFGILKESRVTTFPFSVLDNPMYWGSTANYLGWALMH). A helical membrane pass occupies residues 158-178 (ASPTGLLLTVLVALVYVVALL). Residues 179-199 (FEEPFTAEIYRRKATRLHKRS) lie on the Cytoplasmic side of the membrane. 180-181 (EE) lines the S-adenosyl-L-methionine pocket.

It belongs to the class VI-like SAM-binding methyltransferase superfamily. PEMT/PEM2 methyltransferase family. As to expression, expressed in liver (at protein level).

It localises to the endoplasmic reticulum membrane. It is found in the mitochondrion membrane. The catalysed reaction is a 1,2-diacyl-sn-glycero-3-phosphoethanolamine + S-adenosyl-L-methionine = a 1,2-diacyl-sn-glycero-3-phospho-N-methylethanolamine + S-adenosyl-L-homocysteine + H(+). It catalyses the reaction a 1,2-diacyl-sn-glycero-3-phospho-N-methylethanolamine + S-adenosyl-L-methionine = a 1,2-diacyl-sn-glycero-3-phospho-N,N-dimethylethanolamine + S-adenosyl-L-homocysteine + H(+). It carries out the reaction a 1,2-diacyl-sn-glycero-3-phospho-N,N-dimethylethanolamine + S-adenosyl-L-methionine = a 1,2-diacyl-sn-glycero-3-phosphocholine + S-adenosyl-L-homocysteine + H(+). The enzyme catalyses 1,2-di-(9Z-octadecenoyl)-sn-glycero-3-phosphoethanolamine + S-adenosyl-L-methionine = 1,2-di-(9Z-octadecenoyl)-sn-glycero-3-phospho-N-methylethanolamine + S-adenosyl-L-homocysteine + H(+). The catalysed reaction is 1,2-di-(9Z-octadecenoyl)-sn-glycero-3-phospho-N-methylethanolamine + S-adenosyl-L-methionine = 1,2-di-(9Z-octadecenoyl)-sn-glycero-3-phospho-N,N-dimethylethanolamine + S-adenosyl-L-homocysteine + H(+). It catalyses the reaction 1,2-di-(9Z-octadecenoyl)-sn-glycero-3-phospho-N,N-dimethylethanolamine + S-adenosyl-L-methionine = 1,2-di-(9Z-octadecenoyl)-sn-glycero-3-phosphocholine + S-adenosyl-L-homocysteine + H(+). It carries out the reaction 1,2-di-(9Z,12Z-octadecadienoyl)-sn-glycero-3-phosphoethanolamine + S-adenosyl-L-methionine = 1,2-di-(9Z,12Z-octadecadienoyl)-sn-glycero-3-phospho-N-methylethanolamine + S-adenosyl-L-homocysteine + H(+). The enzyme catalyses 1,2-di-(9Z,12Z-octadecadienoyl)-sn-glycero-3-phospho-N-methylethanolamine + S-adenosyl-L-methionine = 1,2-di-(9Z,12Z-octadecadienoyl)-sn-glycero-3-phospho-N,N-dimethylethanolamine + S-adenosyl-L-homocysteine + H(+). The catalysed reaction is 1,2-di-(9Z,12Z-octadecadienoyl)-sn-glycero-3-phospho-N,N-dimethylethanolamine + S-adenosyl-L-methionine = 1,2-di-(9Z,12Z-octadecadienoyl)-sn-glycero-3-phosphocholine + S-adenosyl-L-homocysteine + H(+). It catalyses the reaction 1,2-di-(9Z,12Z,15Z-octadecatrienoyl)-sn-glycero-3-phosphoethanolamine + S-adenosyl-L-methionine = 1,2-di-(9Z,12Z,15Z-octadecatrienoyl)-sn-glycero-3-phospho-N-methylethanolamine + S-adenosyl-L-homocysteine + H(+). It carries out the reaction 1,2-di-(9Z,12Z,15Z-octadecatrienoyl)-sn-glycero-3-phospho-N-methylethanolamine + S-adenosyl-L-methionine = 1,2-di-(9Z,12Z,15Z-octadecatrienoyl)-sn-glycero-3-phospho-N,N-dimethylethanolamine + S-adenosyl-L-homocysteine + H(+). The enzyme catalyses 1,2-di-(9Z,12Z,15Z-octadecatrienoyl)-sn-glycero-3-phospho-N,N-dimethylethanolamine + S-adenosyl-L-methionine = 1,2-di-(9Z,12Z,15Z-octadecatrienoyl)-sn-glycero-3-phosphocholine + S-adenosyl-L-homocysteine + H(+). The catalysed reaction is 1-hexadecanoyl-2-(4Z,7Z,10Z,13Z,16Z,19Z-docosahexaenoyl)-sn-glycero-3-phosphoethanolamine + S-adenosyl-L-methionine = 1-hexadecanoyl-2-(4Z,7Z,10Z,13Z,16Z,19Z-docosahexaenoyl)-sn-glycero-3-phospho-N-methylethanolamine + S-adenosyl-L-homocysteine + H(+). It catalyses the reaction 1-hexadecanoyl-2-(4Z,7Z,10Z,13Z,16Z,19Z-docosahexaenoyl)-sn-glycero-3-phospho-N-methylethanolamine + S-adenosyl-L-methionine = 1-hexadecanoyl-2-(4Z,7Z,10Z,13Z,16Z,19Z-docosahexaenoyl)-sn-glycero-3-phospho-N,N-dimethylethanolamine + S-adenosyl-L-homocysteine + H(+). It carries out the reaction 1-hexadecanoyl-2-(4Z,7Z,10Z,13Z,16Z,19Z-docosahexaenoyl)-sn-glycero-3-phospho-N,N-dimethylethanolamine + S-adenosyl-L-methionine = 1-hexadecanoyl-2-(4Z,7Z,10Z,13Z,16Z,19Z-docosahexaenoyl)-sn-glycero-3-phosphocholine + S-adenosyl-L-homocysteine + H(+). It functions in the pathway phospholipid metabolism; phosphatidylcholine biosynthesis. In terms of biological role, catalyzes the three sequential steps of the methylation pathway for the biosynthesis of phosphatidylcholine, a critical and essential component for membrane structure. Uses S-adenosylmethionine (S-adenosyl-L-methionine, SAM or AdoMet) as the methyl group donor for the methylation of phosphatidylethanolamine (1,2-diacyl-sn-glycero-3-phosphoethanolamine, PE) to phosphatidylmonomethylethanolamine (1,2-diacyl-sn-glycero-3-phospho-N-methylethanolamine, PMME), PMME to phosphatidyldimethylethanolamine (1,2-diacyl-sn-glycero-3-phospho-N,N-dimethylethanolamine, PDME), and PDME to phosphatidylcholine (1,2-diacyl-sn-glycero-3-phosphocholine, PC), producing S-adenosyl-L-homocysteine in each step. The sequence is that of Phosphatidylethanolamine N-methyltransferase from Rattus norvegicus (Rat).